The primary structure comprises 346 residues: Protein pelota homolog (346 aa).

Belongs to the eukaryotic release factor 1 family. Pelota subfamily. In terms of assembly, monomer. A divalent metal cation serves as cofactor.

The protein localises to the cytoplasm. In terms of biological role, may function in recognizing stalled ribosomes, interact with stem-loop structures in stalled mRNA molecules, and effect endonucleolytic cleavage of the mRNA. May play a role in the release non-functional ribosomes and degradation of damaged mRNAs. Has endoribonuclease activity. In Ignicoccus hospitalis (strain KIN4/I / DSM 18386 / JCM 14125), this protein is Protein pelota homolog.